An 80-amino-acid chain; its full sequence is Acyl carrier protein (80 aa).

Positions 4-79 (EAILEKVRSI…DAVKYIEDKQ (76 aa)) constitute a Carrier domain. The residue at position 39 (S39) is an O-(pantetheine 4'-phosphoryl)serine.

The protein belongs to the acyl carrier protein (ACP) family. 4'-phosphopantetheine is transferred from CoA to a specific serine of apo-ACP by AcpS. This modification is essential for activity because fatty acids are bound in thioester linkage to the sulfhydryl of the prosthetic group.

Its subcellular location is the cytoplasm. It functions in the pathway lipid metabolism; fatty acid biosynthesis. Carrier of the growing fatty acid chain in fatty acid biosynthesis. The protein is Acyl carrier protein of Prochlorococcus marinus (strain MIT 9313).